The following is a 971-amino-acid chain: Reversion-inducing cysteine-rich protein with Kazal motifs (971 aa).

The N-terminal stretch at 1–22 is a signal peptide; that stretch reads MATVRASLRGALLLLLAVAGVA. One copy of the Knot 1 repeat lies at 37 to 84; sequence CCNHSKDNQMCRDVCEQIFSSKSESRLKHLLQRAPDYCPETMVEIWNC. Residues 37–338 form a 5 X Knot repeats region; sequence CCNHSKDNQM…NPVEVSMLTC (302 aa). N-linked (GlcNAc...) asparagine glycosylation is found at Asn39 and Asn86. Knot repeat units follow at residues 104–141 and 151–197; these read CCEL…LFSC and CCSY…LIHC. Asn200 carries N-linked (GlcNAc...) asparagine glycosylation. Knot repeat units follow at residues 216-263 and 292-338; these read CCDR…LWQC and CCSK…MLTC. Asn297 and Asn352 each carry an N-linked (GlcNAc...) asparagine glycan. Kazal-like domains follow at residues 627-673, 698-752, and 753-789; these read TFTG…SCMS, TFDK…PCQP, and FCRA…DCQA. 6 disulfide bridges follow: Cys633-Cys658, Cys635-Cys654, Cys643-Cys671, Cys716-Cys735, Cys724-Cys750, and Cys761-Cys787. Ser942 is lipidated: GPI-anchor amidated serine. Residues 943–971 constitute a propeptide, removed in mature form; it reads AGVRARPSCHSLLLPLSLGLALHLLWTYN.

Belongs to the RECK family. Interacts (via knot repeats) with WNT7A (via disordered linker region); the interaction is direct. Interacts (via knot repeats) with WNT7B (via disordered linker region); the interaction is direct. Interacts with ADGRA2; the interaction is direct. Interacts with MMP9. N-glycosylated. Expressed in various tissues and untransformed cells. It is undetectable in tumor-derived cell lines and oncogenically transformed cells.

It is found in the cell membrane. In terms of biological role, functions together with ADGRA2 to enable brain endothelial cells to selectively respond to Wnt7 signals (WNT7A or WNT7B). Plays a key role in Wnt7-specific responses: required for central nervous system (CNS) angiogenesis and blood-brain barrier regulation. Acts as a Wnt7-specific coactivator of canonical Wnt signaling by decoding Wnt ligands: acts by interacting specifically with the disordered linker region of Wnt7, thereby conferring ligand selectivity for Wnt7. ADGRA2 is then required to deliver RECK-bound Wnt7 to frizzled by assembling a higher-order RECK-ADGRA2-Fzd-LRP5-LRP6 complex. Also acts as a serine protease inhibitor: negatively regulates matrix metalloproteinase-9 (MMP9) by suppressing MMP9 secretion and by direct inhibition of its enzymatic activity. Also inhibits metalloproteinase activity of MMP2 and MMP14 (MT1-MMP). The polypeptide is Reversion-inducing cysteine-rich protein with Kazal motifs (Homo sapiens (Human)).